The primary structure comprises 129 residues: Lysozyme C (129 aa).

The C-type lysozyme domain occupies 1–129; that stretch reads KVFSKCELAH…LSEYLASCNL (129 aa). Cystine bridges form between Cys-6–Cys-127, Cys-30–Cys-115, Cys-65–Cys-80, and Cys-76–Cys-94. Residues Glu-35 and Asp-53 contribute to the active site. Residues Lys-82, Asp-85, Asn-87, Asp-90, and Asp-91 each contribute to the Ca(2+) site.

Belongs to the glycosyl hydrolase 22 family. As to quaternary structure, monomer. Requires Ca(2+) as cofactor.

The enzyme catalyses Hydrolysis of (1-&gt;4)-beta-linkages between N-acetylmuramic acid and N-acetyl-D-glucosamine residues in a peptidoglycan and between N-acetyl-D-glucosamine residues in chitodextrins.. Its function is as follows. Lysozymes have primarily a bacteriolytic function; those in tissues and body fluids are associated with the monocyte-macrophage system and enhance the activity of immunoagents. The chain is Lysozyme C (LYZ) from Equus asinus (Donkey).